A 95-amino-acid chain; its full sequence is MSVDETTVRRIAHLARIAVADEDVGPLQGELNAILAFVEQLGAVDVEGVEPMTSVTPMRMKKRADVVNDGGRASDIVANAPETEDNYFLVPKVVE.

The protein belongs to the GatC family. Heterotrimer of A, B and C subunits.

It carries out the reaction L-glutamyl-tRNA(Gln) + L-glutamine + ATP + H2O = L-glutaminyl-tRNA(Gln) + L-glutamate + ADP + phosphate + H(+). The enzyme catalyses L-aspartyl-tRNA(Asn) + L-glutamine + ATP + H2O = L-asparaginyl-tRNA(Asn) + L-glutamate + ADP + phosphate + 2 H(+). Its function is as follows. Allows the formation of correctly charged Asn-tRNA(Asn) or Gln-tRNA(Gln) through the transamidation of misacylated Asp-tRNA(Asn) or Glu-tRNA(Gln) in organisms which lack either or both of asparaginyl-tRNA or glutaminyl-tRNA synthetases. The reaction takes place in the presence of glutamine and ATP through an activated phospho-Asp-tRNA(Asn) or phospho-Glu-tRNA(Gln). The sequence is that of Aspartyl/glutamyl-tRNA(Asn/Gln) amidotransferase subunit C from Methylorubrum populi (strain ATCC BAA-705 / NCIMB 13946 / BJ001) (Methylobacterium populi).